The primary structure comprises 1394 residues: DNA-directed RNA polymerase subunit beta'' (1394 aa).

Positions 224, 295, 302, and 305 each coordinate Zn(2+).

It belongs to the RNA polymerase beta' chain family. RpoC2 subfamily. In plastids the minimal PEP RNA polymerase catalytic core is composed of four subunits: alpha, beta, beta', and beta''. When a (nuclear-encoded) sigma factor is associated with the core the holoenzyme is formed, which can initiate transcription. The cofactor is Zn(2+).

It is found in the plastid. The protein resides in the chloroplast. It carries out the reaction RNA(n) + a ribonucleoside 5'-triphosphate = RNA(n+1) + diphosphate. Functionally, DNA-dependent RNA polymerase catalyzes the transcription of DNA into RNA using the four ribonucleoside triphosphates as substrates. This Vitis vinifera (Grape) protein is DNA-directed RNA polymerase subunit beta''.